A 258-amino-acid chain; its full sequence is 5'-nucleotidase SurE (258 aa).

The a divalent metal cation site is built by Asp10, Asp11, Ser41, and Asn96.

It belongs to the SurE nucleotidase family. The cofactor is a divalent metal cation.

Its subcellular location is the cytoplasm. It catalyses the reaction a ribonucleoside 5'-phosphate + H2O = a ribonucleoside + phosphate. Its function is as follows. Nucleotidase that shows phosphatase activity on nucleoside 5'-monophosphates. This chain is 5'-nucleotidase SurE, found in Sorangium cellulosum (strain So ce56) (Polyangium cellulosum (strain So ce56)).